The chain runs to 294 residues: MLRLFQAASRASLRLSGSRVIHSLAEGAERPAEISEPRDSAGLLDPVLRKCELRIPVHRRPVQAWVESLRGFEQERIGLAELHPDVFATAPRLDIVHQVAIWQRNFRRISYANTKTRAEVSGGGRKPWQQKGSGRARHGSIRSPLWRGGGVAHGPRGPTSYYYMLPMKVRALGLKVALTVKLMQDDLHIVDSLELPTADPQYLTELAQYRHWGSSVLLVDLTHEEMPKNVVAATSGLNSFNLIPAVGLNVYSMLKHQTLVLTLPSVAFLEDKLLWQDSRYTPLYPFRLPYSDFP.

The tract at residues 119–139 (EVSGGGRKPWQQKGSGRARHG) is disordered. Arg147 carries the post-translational modification Omega-N-methylarginine.

Belongs to the universal ribosomal protein uL4 family. Component of the mitochondrial ribosome large subunit (39S) which comprises a 16S rRNA and about 50 distinct proteins. Interacts with MIEF1 upstream open reading frame protein.

It localises to the mitochondrion. In Mus musculus (Mouse), this protein is Large ribosomal subunit protein uL4m (Mrpl4).